Reading from the N-terminus, the 357-residue chain is uncharacterized protein (357 aa).

Residues 173–211 (VLPILEKLMQDESLYVRKSVANNLNDISKTHPHLLRKVA) form an HEAT repeat.

This is an uncharacterized protein from Bacillus subtilis (strain 168).